We begin with the raw amino-acid sequence, 89 residues long: UPF0250 protein CV_3095 (89 aa).

The protein belongs to the UPF0250 family.

The chain is UPF0250 protein CV_3095 from Chromobacterium violaceum (strain ATCC 12472 / DSM 30191 / JCM 1249 / CCUG 213 / NBRC 12614 / NCIMB 9131 / NCTC 9757 / MK).